The primary structure comprises 183 residues: Large ribosomal subunit protein eL18 (183 aa).

The tract at residues 151-183 (HFGPAPGAPRSHTKPYVRSKGHEQAKPSRRSNV) is disordered.

The protein belongs to the eukaryotic ribosomal protein eL18 family.

Its subcellular location is the cytoplasm. This chain is Large ribosomal subunit protein eL18 (RpL18), found in Plutella xylostella (Diamondback moth).